Here is a 192-residue protein sequence, read N- to C-terminus: Protein hunchback (192 aa).

3 disordered regions span residues 16–59 (SHHH…SNTN), 88–108 (AAMT…WPGL), and 151–192 (ALTP…KYMA). Basic residues predominate over residues 17–31 (HHHHHHHAHHSRRQH). Residues 92–103 (PSPSNNDQNSPL) show a composition bias toward polar residues. Residues 173 to 192 (EPEKEHDLMSNSSEDMKYMA) show a composition bias toward basic and acidic residues.

The protein belongs to the hunchback C2H2-type zinc-finger protein family.

The protein localises to the nucleus. Functionally, gap class segmentation protein that controls development of head structures. This chain is Protein hunchback (hb), found in Drosophila adiastola (Fruit fly).